A 641-amino-acid chain; its full sequence is Chaperone protein DnaK (641 aa).

Thr-200 is subject to Phosphothreonine; by autocatalysis. The span at 605–623 shows a compositional bias: low complexity; it reads AAEQGGSADAASGNAQASK. Residues 605-628 are disordered; sequence AAEQGGSADAASGNAQASKAADDV.

The protein belongs to the heat shock protein 70 family.

In terms of biological role, acts as a chaperone. The protein is Chaperone protein DnaK of Xanthomonas oryzae pv. oryzae (strain KACC10331 / KXO85).